The primary structure comprises 382 residues: Queuine tRNA-ribosyltransferase (382 aa).

The active-site Proton acceptor is aspartate 93. Substrate is bound by residues 93–97 (DSGGF), aspartate 147, glutamine 191, and glycine 218. The RNA binding stretch occupies residues 249-255 (GVGKPED). Aspartate 268 acts as the Nucleophile in catalysis. The RNA binding; important for wobble base 34 recognition stretch occupies residues 273–277 (TRNAR). Cysteine 306, cysteine 308, cysteine 311, and histidine 337 together coordinate Zn(2+).

The protein belongs to the queuine tRNA-ribosyltransferase family. Homodimer. Within each dimer, one monomer is responsible for RNA recognition and catalysis, while the other monomer binds to the replacement base PreQ1. Zn(2+) serves as cofactor.

It carries out the reaction 7-aminomethyl-7-carbaguanine + guanosine(34) in tRNA = 7-aminomethyl-7-carbaguanosine(34) in tRNA + guanine. The protein operates within tRNA modification; tRNA-queuosine biosynthesis. Its function is as follows. Catalyzes the base-exchange of a guanine (G) residue with the queuine precursor 7-aminomethyl-7-deazaguanine (PreQ1) at position 34 (anticodon wobble position) in tRNAs with GU(N) anticodons (tRNA-Asp, -Asn, -His and -Tyr). Catalysis occurs through a double-displacement mechanism. The nucleophile active site attacks the C1' of nucleotide 34 to detach the guanine base from the RNA, forming a covalent enzyme-RNA intermediate. The proton acceptor active site deprotonates the incoming PreQ1, allowing a nucleophilic attack on the C1' of the ribose to form the product. After dissociation, two additional enzymatic reactions on the tRNA convert PreQ1 to queuine (Q), resulting in the hypermodified nucleoside queuosine (7-(((4,5-cis-dihydroxy-2-cyclopenten-1-yl)amino)methyl)-7-deazaguanosine). The polypeptide is Queuine tRNA-ribosyltransferase (Haemophilus influenzae (strain 86-028NP)).